Consider the following 243-residue polypeptide: MISVMQQMINNDSPEDSKESITSVQQTPFFWPSAAAAIPSIQGESRSERESETGSSPQLAPSSTGMVMPGTAGMYGFGPSRMPTANEFGMMMNPVYTDFYQNPLASTGWYSYGQPYQFTANYSIPSLDGNLSDITIPTTAGSSAATTPNAAMHLPWAISHDGKKKRQPYKKDQISRLEYEYSVNQYLTNKRRSELSAQLMLDEKQVKVWFQNRRMKDKKLRQRHSGPFPHGAPVTPCIERLIN.

Residues 1–12 (MISVMQQMINND) show a composition bias toward polar residues. 2 disordered regions span residues 1 to 23 (MISV…SITS) and 40 to 67 (SIQG…TGMV). Residues 162-221 (GKKKRQPYKKDQISRLEYEYSVNQYLTNKRRSELSAQLMLDEKQVKVWFQNRRMKDKKLR) constitute a DNA-binding region (homeobox).

The protein belongs to the abd-b homeobox family. As to quaternary structure, interacts with nuclear receptor nhr-25. Interacts with geminin homolog gmn-1. Interacts with homeodomain protein ceh-20.

It localises to the nucleus. Its function is as follows. Transcription factor, involved in posterior embryonic patterning, morphogenetic movements of the posterior hypodermis, and cell fate specification. Binds to the 5'-TAGT-3' motif in regulatory elements of genes, including Meis protein psa-3 and microRNA mir-57. Involved in a negative regulatory loop with mir-57 to specify posterior cell identities. Required for asymmetric division of the T hypodermal cell, acting via the regulation of asymmetric expression of psa-3 in cooperation with ceh-20 and the Wnt-MAPK pathway. Involved in the regulation of the onset of non-apoptotic cell death in the linker cell, acting together with the Wnt signaling pathway. Involved in promoting embryogenesis, in concert with orphan nuclear receptor nhr-25. May regulate expression of transcription factor dmd-3. This chain is Homeobox protein nob-1, found in Caenorhabditis elegans.